The following is a 4776-amino-acid chain: Pneumococcal serine-rich repeat protein (4776 aa).

A signal peptide spans 1–72 (MTETVEDKVS…VVLGTISTSN (72 aa)). S73, S75, S76, S78, S80, S82, S94, S100, S108, S110, S118, S120, and S121 each carry an O-linked (GlcNAc...) serine glycan. Residues 73 to 121 (SASSTSLSASESASTSASESASTSASTSASTSASESASTSASTSISASS) are serine-rich repeat region 1, SRR1. The segment at 86 to 112 (STSASESASTSASTSASTSASESASTS) is disordered. The tract at residues 122 to 166 (TVVGSQTAAATEATAKKVEEDRKKPASDYVASVTNVNLQSYAKRR) is self aggregating domain. The basic region, BR stretch occupies residues 122-394 (TVVGSQTAAA…QSKSLSVSAS (273 aa)). Residues 164–168 (KRRKR) carry the Host furin cleavage recognition motif. The interval 273–341 (TQTMLTLGSD…GYGLTSSWTV (69 aa)) is keratin 10-binding domain, cell-type specific binding to lung-derived cells. Positions 395-4712 (QSASASASTS…ASTSASASAS (4318 aa)) are serine-rich repeat region 2, SRR2. Disordered stretches follow at residues 481–627 (ASTS…STSA), 861–889 (ASAS…SAST), 925–965 (ASAS…SASA), 1052–1085 (SAST…SASA), 1123–1153 (ASAS…STSA), 1171–1199 (ASAS…STSA), 1311–1357 (ASES…SAST), 1671–1731 (ASES…SESA), 1792–1863 (SASE…STSA), 2105–2133 (ASAS…SAST), 2169–2209 (ASAS…SASA), 2296–2329 (SAST…SASA), 2367–2397 (ASAS…STSA), 2415–2443 (ASAS…STSA), 2571–2631 (ASES…SESA), 2737–2805 (ESAS…STSA), 2855–3113 (ASAS…STSA), 3347–3375 (ASAS…SAST), 3411–3451 (ASAS…SASA), 3538–3571 (SAST…SASA), 3609–3639 (ASAS…STSA), 3657–3685 (ASAS…STSA), 3797–3843 (ASES…SAST), 4167–4197 (ASAS…STSA), 4215–4243 (ASAS…STSA), 4355–4401 (ASES…SAST), and 4706–4747 (SASA…GTES). Polar residues predominate over residues 4715 to 4747 (VSNSANHSNSQVGNTSGSTGKSQKELPNTGTES). The LPXTG sorting signal motif lies at 4740-4744 (LPNTG). T4743 is subject to Pentaglycyl murein peptidoglycan amidated threonine. A propeptide spans 4744–4776 (GTESSIGSVLLGVLAAVTGIGLVAKRRKRDEEE) (removed by sortase).

The protein belongs to the serine-rich repeat protein (SRRP) family. Binds to human and mouse protein keratin 10 (KRT10). Post-translationally, glycosylated. Only truncated substrates greater than 25 residues long are glycosylated by the Gtf1-Gtf2 complex in vitro; only Ser residues have been seen to be glycosylated. Based on electrophoretic mobility it is probable that most of the Ser residues in SSR1 and SSR2 are O-GlcNAcylated. Subsequent glycosylation by up to 7 sugar transferases (Gtf3 and GlyAT, GlyB, GlyD, GlyE, GlyF and GlyG) is able to generate very high sugar polymorphism. Can be cleaved by human furin protease; this fragment contributes to self-aggregation and possibly biofilm formation in vitro.

It localises to the secreted. The protein resides in the cell wall. The protein localises to the cell surface. Functionally, protein that allows bacteria to adhere to mammalian host cells. Required for full virulence in mouse infection models when infected intranasally. Required for adhesion to host cells in vitro and for persistence in the lower respiratory tract. Binds host keratin 10 (KRT10) on lung cells which mediates adhesion via the C-terminus of the basic region (BR, residues 273-341); glycosylation of either protein is not required for the interaction. A region in the N-terminus (residues 122-166) self aggregates, contributing to mature biofilm formation. The basic region (BR, residues 187-385) also self aggregates; the BR binds DNA which enhances self aggregation. This is Pneumococcal serine-rich repeat protein from Streptococcus pneumoniae serotype 4 (strain ATCC BAA-334 / TIGR4).